Reading from the N-terminus, the 188-residue chain is Ribosome-recycling factor (188 aa).

Belongs to the RRF family.

It is found in the cytoplasm. Responsible for the release of ribosomes from messenger RNA at the termination of protein biosynthesis. May increase the efficiency of translation by recycling ribosomes from one round of translation to another. The protein is Ribosome-recycling factor of Blochmanniella pennsylvanica (strain BPEN).